The sequence spans 561 residues: Putative transport protein KPK_3686 (561 aa).

The next 5 helical transmembrane spans lie at 8-28 (LLNGNYILLLFVVLALGLCLG), 37-57 (LGNSIGVLVVSLLLGQQHFAI), 66-86 (FMLFIFCVGVEAGPNFFSIFF), 94-114 (MLALVMVGSAMLIATVLGKVF), and 158-178 (HLSLGYALTYLVGLVSLIVGA). RCK C-terminal domains are found at residues 202–288 (LDTD…SFRN) and 292–373 (VFDR…RIGF). The next 5 membrane-spanning stretches (helical) occupy residues 383–403 (LLAFCAFFIVGLMIGMITFQF), 406–426 (FSFGIGNAAGLLFAGIMLGFL), 447–467 (FGLMVFMAGVGLSAGAGINNG), 478–498 (AGLIVSLLPVVICFLFGAYVL), and 540–560 (AIANVLLTLAGTLIVIIWPGL).

Belongs to the AAE transporter (TC 2.A.81) family. YbjL subfamily.

Its subcellular location is the cell membrane. This Klebsiella pneumoniae (strain 342) protein is Putative transport protein KPK_3686.